A 344-amino-acid polypeptide reads, in one-letter code: UDP-3-O-acylglucosamine N-acyltransferase (344 aa).

The active-site Proton acceptor is the H248.

It belongs to the transferase hexapeptide repeat family. LpxD subfamily. Homotrimer.

The catalysed reaction is a UDP-3-O-[(3R)-3-hydroxyacyl]-alpha-D-glucosamine + a (3R)-hydroxyacyl-[ACP] = a UDP-2-N,3-O-bis[(3R)-3-hydroxyacyl]-alpha-D-glucosamine + holo-[ACP] + H(+). The protein operates within bacterial outer membrane biogenesis; LPS lipid A biosynthesis. Functionally, catalyzes the N-acylation of UDP-3-O-acylglucosamine using 3-hydroxyacyl-ACP as the acyl donor. Is involved in the biosynthesis of lipid A, a phosphorylated glycolipid that anchors the lipopolysaccharide to the outer membrane of the cell. This chain is UDP-3-O-acylglucosamine N-acyltransferase, found in Prochlorococcus marinus (strain MIT 9515).